A 206-amino-acid polypeptide reads, in one-letter code: tRNA (guanine-N(7)-)-methyltransferase (206 aa).

Positions 37, 62, 89, and 112 each coordinate S-adenosyl-L-methionine. Aspartate 112 is an active-site residue. Lysine 116 and aspartate 148 together coordinate substrate.

Belongs to the class I-like SAM-binding methyltransferase superfamily. TrmB family.

The enzyme catalyses guanosine(46) in tRNA + S-adenosyl-L-methionine = N(7)-methylguanosine(46) in tRNA + S-adenosyl-L-homocysteine. The protein operates within tRNA modification; N(7)-methylguanine-tRNA biosynthesis. Its function is as follows. Catalyzes the formation of N(7)-methylguanine at position 46 (m7G46) in tRNA. This chain is tRNA (guanine-N(7)-)-methyltransferase, found in Myxococcus xanthus (strain DK1622).